Consider the following 768-residue polypeptide: Probable beta-glucosidase M (768 aa).

The N-terminal stretch at 1 to 19 (MHAIAGLTGFLAGVSLSYA) is a signal peptide. Asn25, Asn72, and Asn259 each carry an N-linked (GlcNAc...) asparagine glycan. The active site involves Asp287. N-linked (GlcNAc...) asparagine glycosylation is found at Asn315, Asn322, Asn394, Asn434, Asn472, Asn543, and Asn651.

The protein belongs to the glycosyl hydrolase 3 family.

Its subcellular location is the secreted. The catalysed reaction is Hydrolysis of terminal, non-reducing beta-D-glucosyl residues with release of beta-D-glucose.. It functions in the pathway glycan metabolism; cellulose degradation. Beta-glucosidases are one of a number of cellulolytic enzymes involved in the degradation of cellulosic biomass. Catalyzes the last step releasing glucose from the inhibitory cellobiose. This is Probable beta-glucosidase M (bglM) from Aspergillus flavus (strain ATCC 200026 / FGSC A1120 / IAM 13836 / NRRL 3357 / JCM 12722 / SRRC 167).